Consider the following 140-residue polypeptide: Putative pre-16S rRNA nuclease (140 aa).

The protein belongs to the YqgF nuclease family.

Its subcellular location is the cytoplasm. Could be a nuclease involved in processing of the 5'-end of pre-16S rRNA. In Lachnospira eligens (strain ATCC 27750 / DSM 3376 / VPI C15-48 / C15-B4) (Eubacterium eligens), this protein is Putative pre-16S rRNA nuclease.